Here is a 258-residue protein sequence, read N- to C-terminus: Peptidase inhibitor 15 (258 aa).

The signal sequence occupies residues 1 to 21 (MIMNSAVSLVILLSLLCEAHT). A propeptide spanning residues 22 to 60 (VVLLNPTDSSLPANNFTDTEAALSTPLESADIPKARRKR) is cleaved from the precursor. N-linked (GlcNAc...) asparagine glycans are attached at residues N36 and N124. One can recognise an SCP domain in the interval 71 to 211 (LDYHNQVRGK…RRAVYLVCNY (141 aa)).

The protein belongs to the CRISP family. In terms of processing, N-glycosylated. As to expression, weakly expressed. Expressed at low level in prostate, mammary gland, salivary gland and thyroid gland.

Its subcellular location is the secreted. Its function is as follows. Serine protease inhibitor which displays weak inhibitory activity against trypsin. May play a role in facial patterning during embryonic development. The polypeptide is Peptidase inhibitor 15 (Pi15) (Mus musculus (Mouse)).